The primary structure comprises 295 residues: Putative clathrin assembly protein At5g65370 (295 aa).

Residues 26–169 (CSSVNAKTID…SIAEVLGITP (144 aa)) enclose the ENTH domain.

It is found in the membrane. It localises to the clathrin-coated pit. Its subcellular location is the golgi apparatus. The protein localises to the cytoplasmic vesicle. The protein resides in the clathrin-coated vesicle. The chain is Putative clathrin assembly protein At5g65370 from Arabidopsis thaliana (Mouse-ear cress).